The following is a 172-amino-acid chain: Biogenesis of lysosome-related organelles complex 1 subunit 6 (172 aa).

The segment covering 1–10 (MNVPVPPPPD) has biased composition (pro residues). Disordered stretches follow at residues 1 to 35 (MNVPVPPPPDGVLTGPSDSLEAGEPTPGLSDRSPD) and 136 to 172 (ALKLQQQRQKEELEREQQREREFEREKQLTAKPAKRT). Residues 143-164 (RQKEELEREQQREREFEREKQL) are compositionally biased toward basic and acidic residues.

Belongs to the BLOC1S6 family. Homodimer. Octamer composed of one copy each BLOC1S1, BLOC1S2, BLOC1S3, BLOC1S4, BLOC1S5, BLOC1S6, DTNBP1/BLOC1S7 and SNAPIN/BLOC1S8. The BLOC-1 complex associates with the AP-3 protein complex and membrane protein cargos. Interacts with BLOC1S4, BLOC1S5, DTNBP1/BLOC1S7, F-actin, SNAP25 isoform 1 and isoform 2, SNAP47 and STX12. Component of the biogenesis of lysosome-related organelles complex 1 (BLOC-1) composed of BLOC1S1, BLOC1S2, BLOC1S3, BLOC1S4, BLOC1S5, BLOC1S6, DTNBP1/BLOC1S7 and SNAPIN/BLOC1S8.

Its subcellular location is the cytoplasm. The protein localises to the membrane. Component of the BLOC-1 complex, a complex that is required for normal biogenesis of lysosome-related organelles (LRO), such as platelet dense granules and melanosomes. In concert with the AP-3 complex, the BLOC-1 complex is required to target membrane protein cargos into vesicles assembled at cell bodies for delivery into neurites and nerve terminals. The BLOC-1 complex, in association with SNARE proteins, is also proposed to be involved in neurite extension. May play a role in intracellular vesicle trafficking, particularly in the vesicle-docking and fusion process. The chain is Biogenesis of lysosome-related organelles complex 1 subunit 6 (Bloc1s6) from Rattus norvegicus (Rat).